We begin with the raw amino-acid sequence, 239 residues long: tRNA (guanine-N(7)-)-methyltransferase (239 aa).

E69, E94, D121, and D144 together coordinate S-adenosyl-L-methionine. D144 is a catalytic residue. Residue K148 coordinates substrate. The interval 150–155 is interaction with RNA; that stretch reads RHNKRR. Substrate-binding positions include D180 and 217–220; that span reads TKFE.

It belongs to the class I-like SAM-binding methyltransferase superfamily. TrmB family. Monomer.

The catalysed reaction is guanosine(46) in tRNA + S-adenosyl-L-methionine = N(7)-methylguanosine(46) in tRNA + S-adenosyl-L-homocysteine. The protein operates within tRNA modification; N(7)-methylguanine-tRNA biosynthesis. Catalyzes the formation of N(7)-methylguanine at position 46 (m7G46) in tRNA. This Shigella flexneri serotype 5b (strain 8401) protein is tRNA (guanine-N(7)-)-methyltransferase.